A 726-amino-acid chain; its full sequence is Catalase-peroxidase (726 aa).

The disordered stretch occupies residues 1–34 (MSMSDDTHNSLSTGKCPFHQGSHDRSAGAGTSSH). Residues 105 to 226 (WHGAGTYRSV…LGATEMGLIY (122 aa)) constitute a cross-link (tryptophyl-tyrosyl-methioninium (Trp-Tyr) (with M-252)). Residue histidine 106 is the Proton acceptor of the active site. Positions 226-252 (YVNPEGPDHSGEPLSAAAAIRATFGNM) form a cross-link, tryptophyl-tyrosyl-methioninium (Tyr-Met) (with W-105). Histidine 267 serves as a coordination point for heme b.

The protein belongs to the peroxidase family. Peroxidase/catalase subfamily. In terms of assembly, homodimer or homotetramer. Heme b serves as cofactor. In terms of processing, formation of the three residue Trp-Tyr-Met cross-link is important for the catalase, but not the peroxidase activity of the enzyme.

It catalyses the reaction H2O2 + AH2 = A + 2 H2O. The enzyme catalyses 2 H2O2 = O2 + 2 H2O. Functionally, bifunctional enzyme with both catalase and broad-spectrum peroxidase activity. In Citrobacter koseri (strain ATCC BAA-895 / CDC 4225-83 / SGSC4696), this protein is Catalase-peroxidase.